Consider the following 275-residue polypeptide: Large ribosomal subunit protein uL2c (275 aa).

Residues 219 to 254 are disordered; the sequence is TVRGSVMNPCDHPHGGGEGRAPIGRTRPLTPWGKPA.

Belongs to the universal ribosomal protein uL2 family. In terms of assembly, part of the 50S ribosomal subunit.

It localises to the plastid. The protein localises to the chloroplast. The sequence is that of Large ribosomal subunit protein uL2c (rpl2) from Phaeodactylum tricornutum (strain CCAP 1055/1).